The sequence spans 92 residues: Co-chaperonin GroES (92 aa).

This sequence belongs to the GroES chaperonin family. In terms of assembly, heptamer of 7 subunits arranged in a ring. Interacts with the chaperonin GroEL.

Its subcellular location is the cytoplasm. Together with the chaperonin GroEL, plays an essential role in assisting protein folding. The GroEL-GroES system forms a nano-cage that allows encapsulation of the non-native substrate proteins and provides a physical environment optimized to promote and accelerate protein folding. GroES binds to the apical surface of the GroEL ring, thereby capping the opening of the GroEL channel. The polypeptide is Co-chaperonin GroES (Thermotoga maritima (strain ATCC 43589 / DSM 3109 / JCM 10099 / NBRC 100826 / MSB8)).